The primary structure comprises 307 residues: MSEIGTGFPFDPHYVEVLGERMHYVDVGPRDGTPVLFLHGNPTSSYLWRNIIPHVAPSHRCIAPDLIGMGKSDKPDLDYFFDDHVRYLDAFIEALGLEEVVLVIHDWGSALGFHWAKRNPERVKGIACMEFIRPIPTWDEWPEFARETFQAFRTADVGRELIIDQNAFIEGALPKFVVRPLTEVEMDHYREPFLKPVDREPLWRFPNELPIAGEPANIVALVEAYMNWLHQSPVPKLLFWGTPGVLISPAEAARLAESLPNCKTVDIGPGLHFLQEDNPDLIGSEIARWLPALIVGKSIEFDGGWAT.

Residues 34-158 enclose the AB hydrolase-1 domain; sequence PVLFLHGNPT…FQAFRTADVG (125 aa). Aspartate 106 serves as the catalytic Nucleophile. Catalysis depends on glutamate 130, which acts as the Proton donor. Histidine 272 (proton acceptor) is an active-site residue.

It belongs to the haloalkane dehalogenase family. Type 2 subfamily. Monomer.

The catalysed reaction is 1-haloalkane + H2O = a halide anion + a primary alcohol + H(+). Its pathway is xenobiotic degradation; 1,2-dibromoethane degradation. Catalyzes hydrolytic cleavage of carbon-halogen bonds in halogenated aliphatic compounds, leading to the formation of the corresponding primary alcohols, halide ions and protons. Has a broad substrate specificity, which includes mono- and di-chlorinated and brominated alkanes. The highest activity was found with 1,2-dibromoethane, whereas low activity was measured with the analog 1,2-dichloroethane. The protein is Haloalkane dehalogenase (dhaAF) of Mycobacterium sp. (strain GP1).